A 426-amino-acid polypeptide reads, in one-letter code: Histidine--tRNA ligase (426 aa).

It belongs to the class-II aminoacyl-tRNA synthetase family. As to quaternary structure, homodimer.

It localises to the cytoplasm. It carries out the reaction tRNA(His) + L-histidine + ATP = L-histidyl-tRNA(His) + AMP + diphosphate + H(+). The sequence is that of Histidine--tRNA ligase from Streptococcus pyogenes serotype M28 (strain MGAS6180).